The following is a 343-amino-acid chain: tRNA N6-adenosine threonylcarbamoyltransferase (343 aa).

His120 and His124 together coordinate Fe cation. Substrate-binding positions include 142-146, Asp175, Gly188, Asp192, and Asn281; that span reads VVSGG. Residue Asp310 participates in Fe cation binding.

It belongs to the KAE1 / TsaD family. Fe(2+) serves as cofactor.

The protein localises to the cytoplasm. The catalysed reaction is L-threonylcarbamoyladenylate + adenosine(37) in tRNA = N(6)-L-threonylcarbamoyladenosine(37) in tRNA + AMP + H(+). Functionally, required for the formation of a threonylcarbamoyl group on adenosine at position 37 (t(6)A37) in tRNAs that read codons beginning with adenine. Is involved in the transfer of the threonylcarbamoyl moiety of threonylcarbamoyl-AMP (TC-AMP) to the N6 group of A37, together with TsaE and TsaB. TsaD likely plays a direct catalytic role in this reaction. The sequence is that of tRNA N6-adenosine threonylcarbamoyltransferase from Bacillus thuringiensis subsp. konkukian (strain 97-27).